A 329-amino-acid polypeptide reads, in one-letter code: Galactosylgalactosylxylosylprotein 3-beta-glucuronosyltransferase 2 (329 aa).

Residues 1 to 2 are Cytoplasmic-facing; it reads MK. The chain crosses the membrane as a helical; Signal-anchor for type II membrane protein span at residues 3–23; that stretch reads SALFSRFFILLPWILIVIIML. Residues 24–329 are Lumenal-facing; the sequence is DVDTRRPAPP…YRLDTVKIEV (306 aa). The tract at residues 45 to 87 is disordered; sequence VGRGGARLPPRRGGPDSGPGRGWEKRNESRPHARPRPEPPLPT. A compositionally biased stretch (basic and acidic residues) spans 66–81; sequence GWEKRNESRPHARPRP. An N-linked (GlcNAc...) asparagine glycan is attached at Asn-71. UDP-alpha-D-glucuronate contacts are provided by residues 93-95, Asp-124, Arg-161, Arg-166, and 191-193; these read PTY and DDD. A Mn(2+)-binding site is contributed by Asp-193. Residues 240-249 are interaction with galactose moiety of substrate glycoprotein; the sequence is WRADRPFAID. The active-site Proton donor/acceptor is Glu-279. N-linked (GlcNAc...) asparagine glycosylation occurs at Asn-298. Position 306–308 (306–308) interacts with UDP-alpha-D-glucuronate; that stretch reads HTR.

This sequence belongs to the glycosyltransferase 43 family. In terms of assembly, homodimer. Requires Mn(2+) as cofactor.

Its subcellular location is the golgi apparatus membrane. It carries out the reaction 3-O-(beta-D-galactosyl-(1-&gt;3)-beta-D-galactosyl-(1-&gt;4)-beta-D-xylosyl)-L-seryl-[protein] + UDP-alpha-D-glucuronate = 3-O-(beta-D-GlcA-(1-&gt;3)-beta-D-Gal-(1-&gt;3)-beta-D-Gal-(1-&gt;4)-beta-D-Xyl)-L-seryl-[protein] + UDP + H(+). It participates in protein modification; protein glycosylation. Its function is as follows. Involved in the biosynthesis of L2/HNK-1 carbohydrate epitope on both glycolipids and glycoproteins. This is Galactosylgalactosylxylosylprotein 3-beta-glucuronosyltransferase 2 (B3GAT2) from Canis lupus familiaris (Dog).